The following is a 123-amino-acid chain: MPTINQLIRKGREKKVRKSTAPALKCNPQKRGVCTRVYTTTPKKPNSALRKVARVRLTNGIVVTSYIPGVGHNLQEHSVVLIRGGRVKDLPGVRYHIVRGALDLAGVKDRKQGRSKYGAKRPK.

Position 89 is a 3-methylthioaspartic acid (D89).

It belongs to the universal ribosomal protein uS12 family. In terms of assembly, part of the 30S ribosomal subunit. Contacts proteins S8 and S17. May interact with IF1 in the 30S initiation complex.

In terms of biological role, with S4 and S5 plays an important role in translational accuracy. Its function is as follows. Interacts with and stabilizes bases of the 16S rRNA that are involved in tRNA selection in the A site and with the mRNA backbone. Located at the interface of the 30S and 50S subunits, it traverses the body of the 30S subunit contacting proteins on the other side and probably holding the rRNA structure together. The combined cluster of proteins S8, S12 and S17 appears to hold together the shoulder and platform of the 30S subunit. The chain is Small ribosomal subunit protein uS12 from Syntrophotalea carbinolica (strain DSM 2380 / NBRC 103641 / GraBd1) (Pelobacter carbinolicus).